The chain runs to 40 residues: Photosystem II reaction center protein J (40 aa).

Residues Ile8 to Phe28 traverse the membrane as a helical segment.

The protein belongs to the PsbJ family. PSII is composed of 1 copy each of membrane proteins PsbA, PsbB, PsbC, PsbD, PsbE, PsbF, PsbH, PsbI, PsbJ, PsbK, PsbL, PsbM, PsbT, PsbX, PsbY, PsbZ, Psb30/Ycf12, at least 3 peripheral proteins of the oxygen-evolving complex and a large number of cofactors. It forms dimeric complexes.

It localises to the plastid. Its subcellular location is the chloroplast thylakoid membrane. One of the components of the core complex of photosystem II (PSII). PSII is a light-driven water:plastoquinone oxidoreductase that uses light energy to abstract electrons from H(2)O, generating O(2) and a proton gradient subsequently used for ATP formation. It consists of a core antenna complex that captures photons, and an electron transfer chain that converts photonic excitation into a charge separation. The polypeptide is Photosystem II reaction center protein J (Pinus koraiensis (Korean pine)).